Reading from the N-terminus, the 166-residue chain is Mitochondrial fission process protein 1 (166 aa).

Transmembrane regions (helical) follow at residues Ser-33 to Ala-53, Ala-78 to Phe-98, and Thr-125 to Val-145.

It belongs to the MTFP1 family.

The protein localises to the mitochondrion inner membrane. In terms of biological role, involved in the mitochondrial division probably by regulating membrane fission. Loss-of-function leads to apoptosis. The chain is Mitochondrial fission process protein 1 (mtp-18) from Caenorhabditis elegans.